Here is a 554-residue protein sequence, read N- to C-terminus: MAYYRTPSDVTALPAWQALNKHRQAMQNFSMREAFNTDPQRFSQFTLSSAGLFLDYSKNLITTETRDLLVSLAGEVGLKDAIKAQYDGELVNSSEGRPALHTALRRPVGDKLKVNGVDVMPDVHRVLNQMTELVGRIHDGLWRGYTEKPITDVVNIGIGGSFLGPELVSEALVAYAHKGVRCHYLANIDGSEFHELSMKIRAETTLFIVSSKSFNTLETLKNAQAARAWYLAQGGSEVELHRHFIAVSSNNAAAVAFGIREENIFPMWDWVGGRYSLWSAIGLPIALAIGMSNFKELLSGAYTMDQHFQSAPFEQNMPVLLGLLGVWYGNFWNAQSHAILPYDHYLRNITKHLQQLDMESNGKSVRQDGTPTSTDTGPVIWGGVGANGQHAYHQLLHQGTQMIPADFIVPIVSFNPVADHHQWLYANCLSQSQALMMGKTRAEAEAELREKGMDEQEVQKLAPHKVIPGNRPSNTLVVERISPRRLGALVAMYEHKVFVQSVIWGTNAFDQWGVELGKEMGKAVYQRLTGGTEEQADDASTQGLINYFRGRHRG.

E359 functions as the Proton donor in the catalytic mechanism. Residues H390 and K518 contribute to the active site.

The protein belongs to the GPI family.

It localises to the cytoplasm. The catalysed reaction is alpha-D-glucose 6-phosphate = beta-D-fructose 6-phosphate. The protein operates within carbohydrate biosynthesis; gluconeogenesis. It participates in carbohydrate degradation; glycolysis; D-glyceraldehyde 3-phosphate and glycerone phosphate from D-glucose: step 2/4. In terms of biological role, catalyzes the reversible isomerization of glucose-6-phosphate to fructose-6-phosphate. The chain is Glucose-6-phosphate isomerase from Pseudomonas syringae pv. syringae (strain B728a).